Here is a 107-residue protein sequence, read N- to C-terminus: Nucleoid-associated protein BAbS19_I00290 (107 aa).

It belongs to the YbaB/EbfC family. As to quaternary structure, homodimer.

The protein resides in the cytoplasm. It is found in the nucleoid. Its function is as follows. Binds to DNA and alters its conformation. May be involved in regulation of gene expression, nucleoid organization and DNA protection. This is Nucleoid-associated protein BAbS19_I00290 from Brucella abortus (strain S19).